The following is a 114-amino-acid chain: MGSRLLCWVLLCLLGAGPVKAGVTQTPRYLIKTRGQQVTLSCSPISGHRSVSWYQQTPGQGLQFLFEYFSETQRNKGNFPGRFSGRQFSNSRSEMNVSTLELGDSALYLCASSL.

Residues 1-21 (MGSRLLCWVLLCLLGAGPVKA) form the signal peptide. Positions 22 to 114 (GVTQTPRYLI…SALYLCASSL (93 aa)) constitute an Ig-like domain. A disulfide bridge links Cys-42 with Cys-110. The N-linked (GlcNAc...) asparagine glycan is linked to Asn-96.

As to quaternary structure, alpha-beta TR is a heterodimer composed of an alpha and beta chain; disulfide-linked. The alpha-beta TR is associated with the transmembrane signaling CD3 coreceptor proteins to form the TR-CD3 (TcR or TCR). The assembly of alpha-beta TR heterodimers with CD3 occurs in the endoplasmic reticulum where a single alpha-beta TR heterodimer associates with one CD3D-CD3E heterodimer, one CD3G-CD3E heterodimer and one CD247 homodimer forming a stable octameric structure. CD3D-CD3E and CD3G-CD3E heterodimers preferentially associate with TR alpha and TR beta chains, respectively. The association of the CD247 homodimer is the last step of TcR assembly in the endoplasmic reticulum and is required for transport to the cell surface.

It is found in the cell membrane. Its function is as follows. V region of the variable domain of T cell receptor (TR) beta chain that participates in the antigen recognition. Alpha-beta T cell receptors are antigen specific receptors which are essential to the immune response and are present on the cell surface of T lymphocytes. Recognize peptide-major histocompatibility (MH) (pMH) complexes that are displayed by antigen presenting cells (APC), a prerequisite for efficient T cell adaptive immunity against pathogens. Binding of alpha-beta TR to pMH complex initiates TR-CD3 clustering on the cell surface and intracellular activation of LCK that phosphorylates the ITAM motifs of CD3G, CD3D, CD3E and CD247 enabling the recruitment of ZAP70. In turn ZAP70 phosphorylates LAT, which recruits numerous signaling molecules to form the LAT signalosome. The LAT signalosome propagates signal branching to three major signaling pathways, the calcium, the mitogen-activated protein kinase (MAPK) kinase and the nuclear factor NF-kappa-B (NF-kB) pathways, leading to the mobilization of transcription factors that are critical for gene expression and essential for T cell growth and differentiation. The T cell repertoire is generated in the thymus, by V-(D)-J rearrangement. This repertoire is then shaped by intrathymic selection events to generate a peripheral T cell pool of self-MH restricted, non-autoaggressive T cells. Post-thymic interaction of alpha-beta TR with the pMH complexes shapes TR structural and functional avidity. This Homo sapiens (Human) protein is T cell receptor beta variable 5-1.